Here is a 93-residue protein sequence, read N- to C-terminus: Large ribosomal subunit protein bL27 (93 aa).

The propeptide occupies 1-8 (MIMDLQFF). Residues 8-29 (FSHHKGGGSTANGRNSAGRRLG) form a disordered region.

The protein belongs to the bacterial ribosomal protein bL27 family. Post-translationally, the N-terminus is cleaved by ribosomal processing cysteine protease Prp.

The polypeptide is Large ribosomal subunit protein bL27 (Limosilactobacillus fermentum (strain NBRC 3956 / LMG 18251) (Lactobacillus fermentum)).